Consider the following 37-residue polypeptide: Large ribosomal subunit protein bL36 (37 aa).

It belongs to the bacterial ribosomal protein bL36 family.

This Marinomonas sp. (strain MWYL1) protein is Large ribosomal subunit protein bL36.